The primary structure comprises 71 residues: UPF0435 protein BPUM_0734 (71 aa).

Belongs to the UPF0435 family.

The sequence is that of UPF0435 protein BPUM_0734 from Bacillus pumilus (strain SAFR-032).